A 284-amino-acid chain; its full sequence is uncharacterized protein (284 aa).

This is an uncharacterized protein from Acanthamoeba polyphaga (Amoeba).